We begin with the raw amino-acid sequence, 292 residues long: NAD kinase (292 aa).

The Proton acceptor role is filled by D73. Residues 73–74 (DG), 147–148 (NE), H158, R175, D177, 188–193 (TAYSLS), and Q247 each bind NAD(+).

Belongs to the NAD kinase family. Requires a divalent metal cation as cofactor.

It is found in the cytoplasm. The enzyme catalyses NAD(+) + ATP = ADP + NADP(+) + H(+). Functionally, involved in the regulation of the intracellular balance of NAD and NADP, and is a key enzyme in the biosynthesis of NADP. Catalyzes specifically the phosphorylation on 2'-hydroxyl of the adenosine moiety of NAD to yield NADP. The chain is NAD kinase from Escherichia coli (strain SMS-3-5 / SECEC).